A 121-amino-acid chain; its full sequence is Estrogen receptor (121 aa).

Residues 1–121 enclose the NR LBD domain; sequence LFAPNLLLDR…IRHMSNKGME (121 aa). Cys45 carries S-palmitoyl cysteine lipidation.

The protein belongs to the nuclear hormone receptor family. NR3 subfamily. In terms of assembly, binds DNA as a homodimer. Can form a heterodimer with ESR2. Interacts with coactivator NCOA5. Interacts with NCOA7; the interaction is ligand-inducible. Interacts with AKAP13, CUEDC2, HEXIM1, KDM5A, MAP1S, PELP1, SMARD1, and UBE1C. Interacts with MUC1; the interaction is stimulated by 7 beta-estradiol (E2) and enhances ERS1-mediated transcription. Interacts with DNTTIP2, and UIMC1. Interacts with KMT2D/MLL2. Interacts with ATAD2; the interaction is enhanced by estradiol. Interacts with KIF18A and LDB1. Interacts with RLIM (via its C-terminus). Interacts with MACROD1. Interacts with SH2D4A and PLCG. Interacts with SH2D4A; the interaction blocks binding to PLCG and inhibits estrogen-induced cell proliferation. Interacts with DYNLL1. Interacts with CCDC62; the interaction requires estradiol and appears to enhance the transcription of target genes. Interacts with NR2C1; the interaction prevents homodimerization of ESR1 and suppresses its transcriptional activity and cell growth. Interacts with DNAAF4. Interacts with PRMT2. Interacts with PI3KR1 or PIK3R2, SRC and PTK2/FAK1. Interacts with RBFOX2. Interacts with EP300; the interaction is estrogen-dependent and enhanced by CITED1. Interacts with CITED1; the interaction is estrogen-dependent. Interacts with FAM120B, FOXL2, PHB2 and SLC30A9. Interacts with coactivators NCOA3 and NCOA6. Interacts with STK3/MST2 only in the presence of SAV1 and vice-versa. Binds to CSNK1D. Interacts with NCOA2; NCOA2 can interact with ESR1 AF-1 and AF-2 domains simultaneously and mediate their transcriptional synergy. Interacts with DDX5. Interacts with NCOA1; the interaction seems to require a self-association of N-terminal and C-terminal regions. Interacts with ZNF366, DDX17, NFKB1, RELA, SP1 and SP3. Interacts with NRIP1. Interacts with GPER1; the interaction occurs in an estrogen-dependent manner. Interacts with CLOCK and the interaction is stimulated by estrogen. Interacts with TRIP4 (ufmylated); estrogen dependent. Interacts with LMTK3; the interaction phosphorylates ESR1 (in vitro) and protects it against proteasomal degradation. Interacts with CCAR2 (via N-terminus) in a ligand-independent manner. Interacts with ZFHX3. Interacts with SFR1 in a ligand-dependent and -independent manner. Interacts with DCAF13, LATS1 and DCAF1; regulates ESR1 ubiquitination and ubiquitin-mediated proteasomal degradation. Interacts (via DNA-binding domain) with POU4F2 (C-terminus); this interaction increases the estrogen receptor ESR1 transcriptional activity in a DNA- and ligand 17-beta-estradiol-independent manner. Interacts with ESRRB isoform 1. Interacts with UBE3A and WBP2. Interacts with GTF2B. Interacts with RBM39. In the absence of hormonal ligand, interacts with TACC1. Interacts with BAG1; the interaction is promoted in the absence of estradiol (17-beta-estradiol/E2). Interacts with and ubiquitinated by STUB1; the interaction is promoted in the absence of estradiol (17-beta-estradiol/E2). Interacts with NEDD8. In terms of processing, ubiquitinated; regulated by LATS1 via DCAF1 it leads to ESR1 proteasomal degradation. Deubiquitinated by OTUB1. Ubiquitinated by STUB1/CHIP; in the CA1 hippocampal region following loss of endogenous circulating estradiol (17-beta-estradiol/E2). Ubiquitinated by UBR5, leading to its degradation: UBR5 specifically recognizes and binds ligand-bound ESR1 when it is not associated with coactivators (NCOAs). In presence of NCOAs, the UBR5-degron is not accessible, preventing its ubiquitination and degradation. Post-translationally, palmitoylated at Cys-45 by ZDHHC7 and ZDHHC21. Palmitoylation is required for plasma membrane targeting and for rapid intracellular signaling via ERK and AKT kinases and cAMP generation, but not for signaling mediated by the nuclear hormone receptor. Phosphorylated by cyclin A/CDK2 and CK1. Phosphorylation probably enhances transcriptional activity. Dephosphorylation by PPP5C inhibits its transactivation activity. Phosphorylated by LMTK3 (in vitro). In terms of processing, dimethylated by PRMT1. Demethylated by JMJD6.

It localises to the nucleus. The protein resides in the cytoplasm. The protein localises to the golgi apparatus. It is found in the cell membrane. Functionally, nuclear hormone receptor. The steroid hormones and their receptors are involved in the regulation of eukaryotic gene expression and affect cellular proliferation and differentiation in target tissues. Ligand-dependent nuclear transactivation involves either direct homodimer binding to a palindromic estrogen response element (ERE) sequence or association with other DNA-binding transcription factors, such as AP-1/c-Jun, c-Fos, ATF-2, Sp1 and Sp3, to mediate ERE-independent signaling. Ligand binding induces a conformational change allowing subsequent or combinatorial association with multiprotein coactivator complexes through LXXLL motifs of their respective components. Mutual transrepression occurs between the estrogen receptor (ER) and NF-kappa-B in a cell-type specific manner. Decreases NF-kappa-B DNA-binding activity and inhibits NF-kappa-B-mediated transcription from the IL6 promoter and displace RELA/p65 and associated coregulators from the promoter. Recruited to the NF-kappa-B response element of the CCL2 and IL8 promoters and can displace CREBBP. Present with NF-kappa-B components RELA/p65 and NFKB1/p50 on ERE sequences. Can also act synergistically with NF-kappa-B to activate transcription involving respective recruitment adjacent response elements; the function involves CREBBP. Can activate the transcriptional activity of TFF1. Also mediates membrane-initiated estrogen signaling involving various kinase cascades. Essential for MTA1-mediated transcriptional regulation of BRCA1 and BCAS3. Maintains neuronal survival in response to ischemic reperfusion injury when in the presence of circulating estradiol (17-beta-estradiol/E2). This Macaca mulatta (Rhesus macaque) protein is Estrogen receptor (ESR1).